The sequence spans 618 residues: Alpha-dioxygenase PIOX (618 aa).

The active-site Proton acceptor is His157. Position 158 (Asp158) interacts with Ca(2+). Position 162 (His162) interacts with heme b. Ca(2+)-binding residues include Thr210, Trp212, Asp214, and Ser216. His311 provides a ligand contact to hexadecanoate. Residues His382, Arg479, and Arg483 each contribute to the heme b site. Hexadecanoate is bound at residue Glu599.

The protein belongs to the peroxidase family. The cofactor is heme b. Ca(2+) is required as a cofactor.

The catalysed reaction is a 1,2-saturated fatty acid + O2 = a (2R)-2-hydroperoxy fatty acid. The enzyme catalyses (9Z,12Z)-octadecadienoate + O2 = (2R,9Z,12Z)-2-hydroperoxyoctadecadienoate. It catalyses the reaction hexadecanoate + O2 = (2R)-2-hydroperoxyhexadecanoate. It carries out the reaction (9Z,12Z,15Z)-octadecatrienoate + O2 = (R)-2-hydroperoxy-(9Z,12Z,15Z)-octadecatrienoate. The catalysed reaction is tetradecanoate + O2 = (2R)-2-hydroperoxytetradecanoate. The enzyme catalyses octadecanoate + O2 = (2R)-2-hydroperoxyoctadecanoate. It catalyses the reaction (9Z)-octadecenoate + O2 = (2R,9Z)-2-hydroperoxyoctadecenoate. In terms of biological role, alpha-dioxygenase that catalyzes the primary oxygenation step of a variety of 14-20 carbon fatty acids, containing up to three unsaturated bonds, into their corresponding 2R-hydroperoxides. Involved in the production of oxylipins that function in cell signaling, wound healing, and protection from infection. In Oryza sativa subsp. japonica (Rice), this protein is Alpha-dioxygenase PIOX.